The following is a 122-amino-acid chain: Large ribosomal subunit protein uL14 (122 aa).

The protein belongs to the universal ribosomal protein uL14 family. As to quaternary structure, part of the 50S ribosomal subunit. Forms a cluster with proteins L3 and L19. In the 70S ribosome, L14 and L19 interact and together make contacts with the 16S rRNA in bridges B5 and B8.

Functionally, binds to 23S rRNA. Forms part of two intersubunit bridges in the 70S ribosome. This chain is Large ribosomal subunit protein uL14, found in Shewanella baltica (strain OS223).